A 479-amino-acid chain; its full sequence is Integrator complex subunit 12 (479 aa).

A disordered region spans residues 57–140 (SKVSLPKMTK…SPIAFQTKDI (84 aa)). Over residues 70–90 (KSSSSSSASSSITTTSSSKSS) the composition is skewed to low complexity. Over residues 91-128 (TSEKSKKESEKRTLEKIRVDPGEGVEPPKKPRLEKQDS) the composition is skewed to basic and acidic residues. The PHD-type zinc finger occupies 161–217 (GLACVVCRQMTVTSGNQLVECQECHNLYHQECHKPQVTDKDVNDPRLVWYCARCTRQ). 3 disordered regions span residues 221 to 241 (MAQKTQKPPQKPAPALATTVP), 274 to 293 (TAASGNSSSSSSSSSSLPPG), and 305 to 479 (SNVG…KLKK). 2 stretches are compositionally biased toward low complexity: residues 223-239 (QKTQKPPQKPAPALATT) and 280-289 (SSSSSSSSSS). Over residues 305-328 (SNVGPSSTKLSTSQSGNSKTSPAA) the composition is skewed to polar residues. Residues 354 to 364 (SSAGSGNGNNG) show a composition bias toward gly residues. Residues 399-411 (GSLSPGAAPSSSL) are compositionally biased toward low complexity. The span at 412-428 (GGNGGSGGNGAGNGGNS) shows a compositional bias: gly residues. Low complexity predominate over residues 429–451 (AGSSSSSGNNNNNGAKASADGKA). Positions 466–479 (QMVKKKAAQKKLKK) are enriched in basic residues.

It belongs to the Integrator subunit 12 family. Component of the Integrator complex, composed of core subunits INTS1, INTS2, INTS3, INTS4, INTS5, INTS6, INTS7, INTS8, INTS9/RC74, INTS10, INTS11/CPSF3L, INTS12, INTS13, INTS14 and INTS15. The core complex associates with protein phosphatase 2A subunits PPP2CA and PPP2R1A, to form the Integrator-PP2A (INTAC) complex.

It is found in the nucleus. Its function is as follows. Component of the integrator complex, a multiprotein complex that terminates RNA polymerase II (Pol II) transcription in the promoter-proximal region of genes. The integrator complex provides a quality checkpoint during transcription elongation by driving premature transcription termination of transcripts that are unfavorably configured for transcriptional elongation: the complex terminates transcription by (1) catalyzing dephosphorylation of the C-terminal domain (CTD) of Pol II subunit POLR2A/RPB1 and SUPT5H/SPT5, (2) degrading the exiting nascent RNA transcript via endonuclease activity and (3) promoting the release of Pol II from bound DNA. The integrator complex is also involved in terminating the synthesis of non-coding Pol II transcripts, such as enhancer RNAs (eRNAs), small nuclear RNAs (snRNAs), telomerase RNAs and long non-coding RNAs (lncRNAs). The chain is Integrator complex subunit 12 (ints12) from Danio rerio (Zebrafish).